Consider the following 256-residue polypeptide: Acetyl-coenzyme A carboxylase carboxyl transferase subunit alpha (256 aa).

A CoA carboxyltransferase C-terminal domain is found at 1 to 236; the sequence is MSDVARILKE…KTAIVDELAE (236 aa).

Belongs to the AccA family. Acetyl-CoA carboxylase is a heterohexamer composed of biotin carboxyl carrier protein (AccB), biotin carboxylase (AccC) and two subunits each of ACCase subunit alpha (AccA) and ACCase subunit beta (AccD).

Its subcellular location is the cytoplasm. The catalysed reaction is N(6)-carboxybiotinyl-L-lysyl-[protein] + acetyl-CoA = N(6)-biotinyl-L-lysyl-[protein] + malonyl-CoA. It functions in the pathway lipid metabolism; malonyl-CoA biosynthesis; malonyl-CoA from acetyl-CoA: step 1/1. Component of the acetyl coenzyme A carboxylase (ACC) complex. First, biotin carboxylase catalyzes the carboxylation of biotin on its carrier protein (BCCP) and then the CO(2) group is transferred by the carboxyltransferase to acetyl-CoA to form malonyl-CoA. This Streptococcus thermophilus (strain ATCC BAA-250 / LMG 18311) protein is Acetyl-coenzyme A carboxylase carboxyl transferase subunit alpha.